The sequence spans 89 residues: UPF0237 protein DIP1286 (89 aa).

One can recognise an ACT domain in the interval 4–78; that stretch reads IISVTGADHT…KDQNLVIRIQ (75 aa).

Belongs to the UPF0237 family.

In Corynebacterium diphtheriae (strain ATCC 700971 / NCTC 13129 / Biotype gravis), this protein is UPF0237 protein DIP1286.